The chain runs to 405 residues: Serpin I2 (405 aa).

Residues 1 to 18 form the signal peptide; sequence MNKTILWSFLLFFSGSQT. N306 carries an N-linked (GlcNAc...) asparagine glycan.

This sequence belongs to the serpin family. Expressed in pancreas.

Its subcellular location is the secreted. This is Serpin I2 (Serpini2) from Mus musculus (Mouse).